We begin with the raw amino-acid sequence, 327 residues long: Movement protein (327 aa).

A coiled-coil region spans residues 297 to 327 (SASSSNTENELARVSQNIDLLKNKLKEICGE).

Belongs to the caulimoviridae movement protein family. In terms of assembly, homotrimer, through the coiled-coil domain. Interacts with VAP. May interact (via N-terminus) with host prenylated Rab acceptor protein 1D (PRA1D).

It is found in the host cell junction. It localises to the host plasmodesma. Functionally, transports viral genome to neighboring plant cells directly through plasmosdesmata, without any budding. The movement protein allows efficient cell to cell propagation, by bypassing the host cell wall barrier. Acts by forming tubules structures that increase the size exclusion limit (SEL) of plasmodesmata, thereby allowing viral ribonucleocapsids to spread directly to neighboring cells. In Arabidopsis thaliana (Mouse-ear cress), this protein is Movement protein.